The sequence spans 534 residues: Prolyl 4-hydroxylase subunit alpha-1 (534 aa).

The N-terminal stretch at 1-17 (MIWYILVVGILLPQSLA) is a signal peptide. N-linked (GlcNAc...) asparagine glycosylation is present at Asn113. One copy of the TPR repeat lies at 205–238 (VSVLDYLSYAVYQQGDLDKALLLTKKLLELDPEH). Positions 258 to 277 (ANKSSSDDQSDQKTTLKKKG) are disordered. Residue Asn259 is glycosylated (N-linked (GlcNAc...) asparagine). The Fe2OG dioxygenase domain maps to 411 to 519 (TAEELQVANY…KWVSNKWLHE (109 aa)). Residues His429, Asp431, and His500 each coordinate Fe cation. Lys510 is a binding site for 2-oxoglutarate.

It belongs to the P4HA family. Heterotetramer of two alpha-1 chains and two beta chains (P4HB)(the beta chain is the multi-functional PDI), where P4HB plays the role of a structural subunit; this tetramer catalyzes the formation of 4-hydroxyproline in collagen. Requires Fe(2+) as cofactor. L-ascorbate is required as a cofactor.

The protein localises to the endoplasmic reticulum lumen. The enzyme catalyses L-prolyl-[collagen] + 2-oxoglutarate + O2 = trans-4-hydroxy-L-prolyl-[collagen] + succinate + CO2. Its function is as follows. Catalyzes the post-translational formation of 4-hydroxyproline in -Xaa-Pro-Gly- sequences in collagens and other proteins. The chain is Prolyl 4-hydroxylase subunit alpha-1 (P4HA1) from Bos taurus (Bovine).